The following is a 1279-amino-acid chain: Photoreceptor cilium actin regulator (1279 aa).

A lipid anchor (N-myristoyl glycine) is attached at Gly-2. Cys-3 is lipidated: S-palmitoyl cysteine. 5 disordered regions span residues Asn-101–Val-168, Ala-380–Glu-598, Glu-802–Pro-821, Ala-860–Lys-1107, and Lys-1127–Ser-1279. A compositionally biased stretch (basic and acidic residues) spans Phe-126–Val-168. Acidic residues predominate over residues Ser-477–Ser-491. Basic and acidic residues-rich tracts occupy residues Leu-535–Phe-547 and Gly-580–Glu-598. A compositionally biased stretch (acidic residues) spans Ser-804–Glu-818. Composition is skewed to polar residues over residues Gly-886–Thr-901, Asp-913–Glu-925, and Thr-955–Leu-965. Over residues Phe-972–Leu-990 the composition is skewed to basic and acidic residues. The span at Arg-1047–Ala-1062 shows a compositional bias: polar residues. Residues Pro-1076–Arg-1090 show a composition bias toward low complexity. Residues Gly-1091–Asp-1100 are compositionally biased toward basic and acidic residues. A compositionally biased stretch (polar residues) spans Trp-1226–Arg-1241. Residues Arg-1259–Ser-1279 are compositionally biased toward basic and acidic residues.

In terms of tissue distribution, specifically expressed in retina.

It is found in the cell projection. Its subcellular location is the cilium. The protein resides in the photoreceptor outer segment. The protein localises to the photoreceptor inner segment. In terms of biological role, plays an essential role for normal photoreceptor cell maintenance and vision. This Mus musculus (Mouse) protein is Photoreceptor cilium actin regulator.